We begin with the raw amino-acid sequence, 611 residues long: Dihydroxy-acid dehydratase (611 aa).

Asp-81 serves as a coordination point for Mg(2+). Cys-122 provides a ligand contact to [2Fe-2S] cluster. Mg(2+) is bound by residues Asp-123 and Lys-124. N6-carboxylysine is present on Lys-124. Cys-195 contacts [2Fe-2S] cluster. Residue Glu-491 coordinates Mg(2+). Residue Ser-517 is the Proton acceptor of the active site.

This sequence belongs to the IlvD/Edd family. In terms of assembly, homodimer. It depends on [2Fe-2S] cluster as a cofactor. Mg(2+) serves as cofactor.

The enzyme catalyses (2R)-2,3-dihydroxy-3-methylbutanoate = 3-methyl-2-oxobutanoate + H2O. It carries out the reaction (2R,3R)-2,3-dihydroxy-3-methylpentanoate = (S)-3-methyl-2-oxopentanoate + H2O. It functions in the pathway amino-acid biosynthesis; L-isoleucine biosynthesis; L-isoleucine from 2-oxobutanoate: step 3/4. It participates in amino-acid biosynthesis; L-valine biosynthesis; L-valine from pyruvate: step 3/4. Functionally, functions in the biosynthesis of branched-chain amino acids. Catalyzes the dehydration of (2R,3R)-2,3-dihydroxy-3-methylpentanoate (2,3-dihydroxy-3-methylvalerate) into 2-oxo-3-methylpentanoate (2-oxo-3-methylvalerate) and of (2R)-2,3-dihydroxy-3-methylbutanoate (2,3-dihydroxyisovalerate) into 2-oxo-3-methylbutanoate (2-oxoisovalerate), the penultimate precursor to L-isoleucine and L-valine, respectively. The polypeptide is Dihydroxy-acid dehydratase (Allorhizobium ampelinum (strain ATCC BAA-846 / DSM 112012 / S4) (Agrobacterium vitis (strain S4))).